The sequence spans 607 residues: COMPASS component cclA (607 aa).

Low complexity predominate over residues M1–P19. 2 disordered regions span residues M1 to H22 and G34 to A86. A compositionally biased stretch (basic residues) spans S57–E69. Residues I157–A376 enclose the B30.2/SPRY domain. The segment at N587–G607 is disordered.

It belongs to the cclA family. Component of the COMPASS complex.

The protein localises to the nucleus. The protein resides in the chromosome. It localises to the telomere. In terms of biological role, component of the COMPASS (Set1C) complex that specifically mono-, di- and trimethylates histone H3 to form H3K4me1/2/3, which subsequently plays a role in telomere length maintenance and transcription elongation regulation. Controls the production of several secondary metabolites, including monodictyphenone, emodin and emodin derivatives, as well as two anti-osteoporosis polyketides, F9775A and F9775B. The chain is COMPASS component cclA from Emericella nidulans (strain FGSC A4 / ATCC 38163 / CBS 112.46 / NRRL 194 / M139) (Aspergillus nidulans).